Here is a 619-residue protein sequence, read N- to C-terminus: Auxin efflux carrier component 7 (619 aa).

Residues 1 to 7 (MITWHDL) lie on the Extracellular side of the membrane. A helical transmembrane segment spans residues 8–28 (YTVLTAVIPLYVAMILAYGSV). Residues 29–38 (RWWKIFSPDQ) are Cytoplasmic-facing. A helical membrane pass occupies residues 39-59 (CSGINRFVAIFAVPLLSFHFI). Val-51 serves as a coordination point for (indol-3-yl)acetate. The Extracellular segment spans residues 60–71 (SSNNPYAMNLRF). A helical membrane pass occupies residues 72-92 (IAADTLQKLIMLTLLIIWANF). Residues 93–101 (TRSGSLEWS) lie on the Cytoplasmic side of the membrane. Residues 102–122 (ITIFSLSTLPNTLVMGIPLLI) traverse the membrane as a helical segment. (indol-3-yl)acetate-binding residues include Asn-112 and Leu-114. Over 123–131 (AMYGEYSGS) the chain is Extracellular. Residues 132–152 (LMVQIVVLQCIIWYTLLLFLF) form a helical membrane-spanning segment. Residue Tyr-145 participates in (indol-3-yl)acetate binding. Over 153–479 (EYRGAKILIM…LIRNPNTYSS (327 aa)) the chain is Cytoplasmic. 3 positions are modified to phosphoserine: Ser-229, Ser-246, and Ser-286. The tract at residues 306–340 (GAPGSYPAPNPEFSTGNKTGSKAPKENHHHVGKSN) is disordered. Thr-320 bears the Phosphothreonine mark. The residue at position 357 (Ser-357) is a Phosphoserine. The segment at 393–413 (HTQNGENKAGPMNGDYGGEEE) is disordered. A helical membrane pass occupies residues 480–500 (LIGLIWALVAFRWDVAMPKII). Residues 501–503 (QQS) are Extracellular-facing. Residues 504–524 (ISILSDAGLGMAMFSLGLFMA) traverse the membrane as a helical segment. The Cytoplasmic portion of the chain corresponds to 525–538 (LQPKLIACGNSTAT). Residues 539–559 (FAMAVRFFTGPAVMAVAAMAI) traverse the membrane as a helical segment. Over 560–564 (GLRGD) the chain is Extracellular. Residues 565–585 (LLRVAIVQAALPQGIVPFVFA) form a helical membrane-spanning segment. (indol-3-yl)acetate-binding residues include Ile-579 and Val-580. The Cytoplasmic segment spans residues 586 to 598 (KEYNVHPAILSTG). A helical transmembrane segment spans residues 599–619 (VIFGMLIALPITLVYYILLGL).

Belongs to the auxin efflux carrier (TC 2.A.69.1) family. As to quaternary structure, homodimer.

The protein resides in the cell membrane. Its function is as follows. Acts as a component of the auxin efflux carrier. Mediates the initial auxin gradient which contributes to the establishment of the apical-basal axis in early embryogenesis. Together with PIN3 and PIN4, involved in the connective auxin transport (CAT) that ensures communication across the shoot system, and modulates strigolactone-mediated shoot branching control. The abcb19 pin3 pin4 pin7 quadruple mutant exhibits an additive phenotype on strigolactone-mediated bud outgrowth responses and shoot branching control. The chain is Auxin efflux carrier component 7 from Arabidopsis thaliana (Mouse-ear cress).